Here is a 458-residue protein sequence, read N- to C-terminus: Elongation factor 1-alpha 1 (458 aa).

Gly-2 carries the post-translational modification N,N,N-trimethylglycine. Lys-3 carries the post-translational modification N6,N6-dimethyllysine; alternate. Lys-3 carries the post-translational modification N6-methyllysine; alternate. Residues 5–240 (KTHVNVVVIG…DAIEPPTRPT (236 aa)) enclose the tr-type G domain. A G1 region spans residues 14-21 (GHVDSGKS). Position 14 to 21 (14 to 21 (GHVDSGKS)) interacts with GTP. Residue Lys-30 is modified to N6-methyllysine. Residues 70–74 (GITID) are G2. An N6,N6,N6-trimethyllysine modification is found at Lys-79. A G3 region spans residues 91-94 (DAPG). Residues 91–95 (DAPGH) and 153–156 (NKMD) contribute to the GTP site. Residues 153 to 156 (NKMD) are G4. Positions 192 to 194 (SGW) are G5. Position 316 is an N6,N6-dimethyllysine; alternate (Lys-316). Lys-316 is modified (N6-methyllysine; alternate). Residue Lys-390 is modified to N6-methyllysine.

The protein belongs to the TRAFAC class translation factor GTPase superfamily. Classic translation factor GTPase family. EF-Tu/EF-1A subfamily.

The protein resides in the cytoplasm. This protein promotes the GTP-dependent binding of aminoacyl-tRNA to the A-site of ribosomes during protein biosynthesis. The chain is Elongation factor 1-alpha 1 (TEF1) from Candida albicans (strain SC5314 / ATCC MYA-2876) (Yeast).